The chain runs to 336 residues: Aspartate carbamoyltransferase catalytic subunit (336 aa).

Arg-72 and Thr-73 together coordinate carbamoyl phosphate. Lys-100 serves as a coordination point for L-aspartate. Carbamoyl phosphate-binding residues include Arg-122, His-152, and Gln-155. The L-aspartate site is built by Arg-185 and Arg-240. Residues Gly-281 and Pro-282 each coordinate carbamoyl phosphate.

The protein belongs to the aspartate/ornithine carbamoyltransferase superfamily. ATCase family. As to quaternary structure, heterododecamer (2C3:3R2) of six catalytic PyrB chains organized as two trimers (C3), and six regulatory PyrI chains organized as three dimers (R2).

It carries out the reaction carbamoyl phosphate + L-aspartate = N-carbamoyl-L-aspartate + phosphate + H(+). The protein operates within pyrimidine metabolism; UMP biosynthesis via de novo pathway; (S)-dihydroorotate from bicarbonate: step 2/3. In terms of biological role, catalyzes the condensation of carbamoyl phosphate and aspartate to form carbamoyl aspartate and inorganic phosphate, the committed step in the de novo pyrimidine nucleotide biosynthesis pathway. This is Aspartate carbamoyltransferase catalytic subunit from Marinobacter nauticus (strain ATCC 700491 / DSM 11845 / VT8) (Marinobacter aquaeolei).